We begin with the raw amino-acid sequence, 392 residues long: Metallophosphoesterase 1 (392 aa).

The chain crosses the membrane as a helical span at residues 25–45; it reads KLAALVFAVVLFCEFLIYYLV. Residues Asp-73, Asp-115, Asn-153, His-246, His-300, and His-302 each contribute to the a divalent metal cation site. A helical transmembrane segment spans residues 352–372; it reads DTVLATYCVAAGLLVVLILVH.

Belongs to the metallophosphoesterase superfamily. MPPE1 family. As to quaternary structure, interacts with GPI-anchor proteins (via the GPI portion). Interacts with TMED10. It depends on Mn(2+) as a cofactor.

The protein resides in the endoplasmic reticulum-Golgi intermediate compartment membrane. Metallophosphoesterase that catalyzes the removal of a side-chain ethanolamine-phosphate (EtNP) from the second mannose of the GPI-anchor protein intermediate. Participates in the glycan remodeling steps of GPI-anchor maturation to allow an efficient transport of GPI-anchor proteins from the endoplasmic reticulum to the Golgi. The protein is Metallophosphoesterase 1 of Ailuropoda melanoleuca (Giant panda).